A 250-amino-acid chain; its full sequence is 5'-nucleotidase SurE (250 aa).

A divalent metal cation is bound by residues aspartate 8, aspartate 9, serine 40, and asparagine 94.

It belongs to the SurE nucleotidase family. A divalent metal cation serves as cofactor.

It is found in the cytoplasm. It carries out the reaction a ribonucleoside 5'-phosphate + H2O = a ribonucleoside + phosphate. Its function is as follows. Nucleotidase that shows phosphatase activity on nucleoside 5'-monophosphates. The chain is 5'-nucleotidase SurE from Wolbachia sp. subsp. Brugia malayi (strain TRS).